A 90-amino-acid chain; its full sequence is Large ribosomal subunit protein eL37 (90 aa).

Positions 19, 22, 34, and 37 each coordinate Zn(2+). A C4-type zinc finger spans residues 19-37; the sequence is CRRCGRQSYHKQKNSCSSC. Residues 21–31 are compositionally biased toward basic residues; sequence RCGRQSYHKQK. A disordered region spans residues 21–59; the sequence is RCGRQSYHKQKNSCSSCGYPNPKMRNPGSIKARRRRTIG.

This sequence belongs to the eukaryotic ribosomal protein eL37 family. Requires Zn(2+) as cofactor.

Binds to the 23S rRNA. The chain is Large ribosomal subunit protein eL37 (RPL37) from Encephalitozoon cuniculi (strain GB-M1) (Microsporidian parasite).